Reading from the N-terminus, the 212-residue chain is tRNA (guanine-N(7)-)-methyltransferase (212 aa).

Glu-44, Glu-69, Asp-96, and Asp-118 together coordinate S-adenosyl-L-methionine. Asp-118 is a catalytic residue. Lys-122 contacts substrate. The segment at 124-129 is interaction with RNA; it reads RHEKRR. Substrate contacts are provided by residues Asp-154 and 192–195; that span reads TEYE.

The protein belongs to the class I-like SAM-binding methyltransferase superfamily. TrmB family.

The catalysed reaction is guanosine(46) in tRNA + S-adenosyl-L-methionine = N(7)-methylguanosine(46) in tRNA + S-adenosyl-L-homocysteine. It functions in the pathway tRNA modification; N(7)-methylguanine-tRNA biosynthesis. In terms of biological role, catalyzes the formation of N(7)-methylguanine at position 46 (m7G46) in tRNA. This Pediococcus pentosaceus (strain ATCC 25745 / CCUG 21536 / LMG 10740 / 183-1w) protein is tRNA (guanine-N(7)-)-methyltransferase.